The sequence spans 27 residues: thr operon leader peptide (27 aa).

Belongs to the thr operon leader peptide family.

This protein is involved in control of the biosynthesis of threonine. The polypeptide is thr operon leader peptide (Escherichia coli O157:H7).